The following is a 242-amino-acid chain: DNA repair protein RecO (242 aa).

It belongs to the RecO family.

Functionally, involved in DNA repair and RecF pathway recombination. This is DNA repair protein RecO from Bacteroides fragilis (strain ATCC 25285 / DSM 2151 / CCUG 4856 / JCM 11019 / LMG 10263 / NCTC 9343 / Onslow / VPI 2553 / EN-2).